A 270-amino-acid polypeptide reads, in one-letter code: uncharacterized protein (270 aa).

The disordered stretch occupies residues 235–270; it reads LADSDLEADSDDSESFEFVENPEPSENGSEPTIKND. A compositionally biased stretch (acidic residues) spans 238–251; it reads SDLEADSDDSESFE. The span at 255 to 270 shows a compositional bias: low complexity; sequence NPEPSENGSEPTIKND.

This is an uncharacterized protein from Halorubrum sp. PV6 (HRPV-1).